A 477-amino-acid polypeptide reads, in one-letter code: Aspartyl/glutamyl-tRNA(Asn/Gln) amidotransferase subunit B (477 aa).

This sequence belongs to the GatB/GatE family. GatB subfamily. As to quaternary structure, heterotrimer of A, B and C subunits.

The catalysed reaction is L-glutamyl-tRNA(Gln) + L-glutamine + ATP + H2O = L-glutaminyl-tRNA(Gln) + L-glutamate + ADP + phosphate + H(+). The enzyme catalyses L-aspartyl-tRNA(Asn) + L-glutamine + ATP + H2O = L-asparaginyl-tRNA(Asn) + L-glutamate + ADP + phosphate + 2 H(+). Allows the formation of correctly charged Asn-tRNA(Asn) or Gln-tRNA(Gln) through the transamidation of misacylated Asp-tRNA(Asn) or Glu-tRNA(Gln) in organisms which lack either or both of asparaginyl-tRNA or glutaminyl-tRNA synthetases. The reaction takes place in the presence of glutamine and ATP through an activated phospho-Asp-tRNA(Asn) or phospho-Glu-tRNA(Gln). The protein is Aspartyl/glutamyl-tRNA(Asn/Gln) amidotransferase subunit B of Streptococcus gordonii (strain Challis / ATCC 35105 / BCRC 15272 / CH1 / DL1 / V288).